The primary structure comprises 408 residues: Mitochondrial outer membrane protein SLC25A46 (408 aa).

Disordered stretches follow at residues M1–C23 and H52–G80. Residues L66–G76 show a composition bias toward low complexity. A Solcar 1 repeat occupies Q86–P177. The next 6 membrane-spanning stretches (helical) occupy residues F93–L113, F157–P177, I189–A209, L248–I268, F304–L324, and L373–L393. The stretch at D301–L403 is one Solcar 2 repeat.

This sequence belongs to the mitochondrial carrier (TC 2.A.29) family.

It is found in the mitochondrion outer membrane. Its function is as follows. Transmembrane protein of the mitochondrial outer membrane that controls mitochondrial organization. May regulate the assembly of the MICOS (mitochondrial contact site and cristae organizing system) complex which is essential to the biogenesis and dynamics of mitochondrial cristae, the inwards folds of the inner mitochondrial membrane. Through its interaction with the EMC (endoplasmic reticulum membrane protein complex), could regulate mitochondrial lipid homeostasis and thereby mitochondrial fission. This Gallus gallus (Chicken) protein is Mitochondrial outer membrane protein SLC25A46.